The sequence spans 370 residues: Dual-specificity RNA methyltransferase RlmN (370 aa).

The active-site Proton acceptor is E93. The Radical SAM core domain occupies 99-337 (EEGRGTLCVS…VTTVRKTRGD (239 aa)). A disulfide bridge links C106 with C343. Residues C113, C117, and C120 each contribute to the [4Fe-4S] cluster site. Residues 167-168 (GE), S199, 221-223 (SLH), and N300 contribute to the S-adenosyl-L-methionine site. Catalysis depends on C343, which acts as the S-methylcysteine intermediate.

The protein belongs to the radical SAM superfamily. RlmN family. Requires [4Fe-4S] cluster as cofactor.

The protein resides in the cytoplasm. The enzyme catalyses adenosine(2503) in 23S rRNA + 2 reduced [2Fe-2S]-[ferredoxin] + 2 S-adenosyl-L-methionine = 2-methyladenosine(2503) in 23S rRNA + 5'-deoxyadenosine + L-methionine + 2 oxidized [2Fe-2S]-[ferredoxin] + S-adenosyl-L-homocysteine. It catalyses the reaction adenosine(37) in tRNA + 2 reduced [2Fe-2S]-[ferredoxin] + 2 S-adenosyl-L-methionine = 2-methyladenosine(37) in tRNA + 5'-deoxyadenosine + L-methionine + 2 oxidized [2Fe-2S]-[ferredoxin] + S-adenosyl-L-homocysteine. Its function is as follows. Specifically methylates position 2 of adenine 2503 in 23S rRNA and position 2 of adenine 37 in tRNAs. m2A2503 modification seems to play a crucial role in the proofreading step occurring at the peptidyl transferase center and thus would serve to optimize ribosomal fidelity. This Francisella tularensis subsp. holarctica (strain FTNF002-00 / FTA) protein is Dual-specificity RNA methyltransferase RlmN.